A 219-amino-acid chain; its full sequence is GTP-binding protein Rit1 (219 aa).

GTP-binding positions include 28 to 35, 75 to 79, and 134 to 137; these read GAGGVGKS, DTAGQ, and NKSD.

The protein belongs to the small GTPase superfamily. Ras family. In terms of assembly, interacts with AFDN, the C-terminal domain of RALGDS and RLF, but not with RIN1 and PIK3CA. RLF binds exclusively to the active GTP-bound form. Strongly interacts with BRAF, but only weakly with RAF1. BARF and RAF1 association is dependent upon the GTP-bound state. Interacts with RGL3. Expressed in many tissues.

Its subcellular location is the cell membrane. The catalysed reaction is GTP + H2O = GDP + phosphate + H(+). Alternates between an inactive form bound to GDP and an active form bound to GTP. Functionally, plays a crucial role in coupling NGF stimulation to the activation of both EPHB2 and MAPK14 signaling pathways and in NGF-dependent neuronal differentiation. Involved in ELK1 transactivation through the Ras-MAPK signaling cascade that mediates a wide variety of cellular functions, including cell proliferation, survival, and differentiation. The sequence is that of GTP-binding protein Rit1 (Rit1) from Mus musculus (Mouse).